The chain runs to 440 residues: Thymidine phosphorylase (440 aa).

It belongs to the thymidine/pyrimidine-nucleoside phosphorylase family. As to quaternary structure, homodimer.

It catalyses the reaction thymidine + phosphate = 2-deoxy-alpha-D-ribose 1-phosphate + thymine. It functions in the pathway pyrimidine metabolism; dTMP biosynthesis via salvage pathway; dTMP from thymine: step 1/2. Its function is as follows. The enzymes which catalyze the reversible phosphorolysis of pyrimidine nucleosides are involved in the degradation of these compounds and in their utilization as carbon and energy sources, or in the rescue of pyrimidine bases for nucleotide synthesis. The polypeptide is Thymidine phosphorylase (Yersinia enterocolitica serotype O:8 / biotype 1B (strain NCTC 13174 / 8081)).